A 982-amino-acid chain; its full sequence is MDASSHDKPLSESKECVLNNSENDVFRLGTEPFVTPQKHVADATPNLCTPDTFKSPLDFTTVTVEQLGITPESFVKTSSGKSTSSLQKARRRSTVGVRGSPETNCLIRFIAQQRNLKKAVLSPLAREPHFEGSPRLYRNASVLRERMSAFRSAFHSIQETKMASSPSAAEADGESRISDLTRKEDLLEYQQSGFPVNSSSKRRRISSQDSPDNYLSGTKALADEACAGGASTDLAEKSPDIGSAQPGCMAAPLPELRETSQGLAVTDCVEGPVTPLSSGTATATRSPETPMCGSSSPSAKTTATRSPATPVCGSSTPSAKTFVLRSVLKKPGKLFSENGKESNLCDDGAHLISYPSNSCKEGRAGRENCKTPGCLNPRKRKRVTFGEDLSPEVFDESLPANTPLCKGGTPVRPRTVKTTSPLQSPVHEQFLQPNFDDKEENLENIEPPQGSFANLSLSKSSLSETPPGTNTCSSLNKDEEIICSIVRPTRTSQRRKQTLSSTGVCSSYTTQAEPRKEKMSRRKSREKKHTSAALPKKKQVLKSYRKKKKGKKDVEKCFYGPRDIASKKPLLSPIPELPEVSEATPLADCTQGTSSDDFNKCGQLEEVNSFEIPTQRKRRLPQKADSPELDPAHHQSQVSDKCCYLLPLTTASERGPNASTRDTGSEGNTRAESKCQSAKEPKPGTKMESGLVPRASVTQDHIVSKNPKPLGSPQSQDLFKAGQNLENPCEILIVSESMNLKCEKESECLAPQGSLQGSPVSTDSKRDLNCSEDVLIQNIKEPASHSENVGRKCAGNGSPGSGRERKWRRRTVCCGGQSSYLEQNGNPASSCSGENFVEISLESVQLIEELSNTIEQSFQRTSSKTKVRRSTRLQRDLENTGLVWLSPSPSTLQKPRRRMTICTLDSRGFECPSSKEETISSGQNPGPLPAVSGSESQGVGSSALPRKRRSLCGSTLTDANSATQPPDCKRKPSLKGESAQLP.

The segment covering 75–87 (VKTSSGKSTSSLQ) has biased composition (polar residues). Residues 75–97 (VKTSSGKSTSSLQKARRRSTVGV) form a disordered region. Serine 100, serine 122, and serine 133 each carry phosphoserine. Disordered regions lie at residues 192-216 (SGFP…NYLS) and 274-315 (TPLS…CGSS). Composition is skewed to polar residues over residues 207-216 (SQDSPDNYLS) and 275-315 (PLSS…CGSS). Residues serine 286, serine 296, and serine 306 each carry the phosphoserine modification. The residue at position 309 (threonine 309) is a Phosphothreonine. A PP1-binding domain is found at 379–436 (KRKRVTFGEDLSPEVFDESLPANTPLCKGGTPVRPRTVKTTSPLQSPVHEQFLQPNFD). Residues serine 390 and serine 397 each carry the phosphoserine modification. Disordered stretches follow at residues 400 to 473 (ANTP…NTCS), 489 to 545 (TRTS…KSYR), 568 to 638 (KPLL…QSQV), and 651 to 716 (ASER…PQSQ). Position 402 is a phosphothreonine (threonine 402). Position 424 is a phosphoserine (serine 424). 2 stretches are compositionally biased toward polar residues: residues 451 to 473 (SFAN…NTCS) and 498 to 512 (TLSS…TTQA). Over residues 518–545 (KMSRRKSREKKHTSAALPKKKQVLKSYR) the composition is skewed to basic residues. 2 positions are modified to phosphoserine: serine 572 and serine 595. Positions 651 to 668 (ASERGPNASTRDTGSEGN) are enriched in polar residues. The span at 669–685 (TRAESKCQSAKEPKPGT) shows a compositional bias: basic and acidic residues. Residue serine 735 is modified to Phosphoserine. Lysine 741 is covalently cross-linked (Glycyl lysine isopeptide (Lys-Gly) (interchain with G-Cter in SUMO2)). Positions 910–982 (ECPSSKEETI…SLKGESAQLP (73 aa)) are disordered. Serine 913 bears the Phosphoserine mark. The span at 931-942 (VSGSESQGVGSS) shows a compositional bias: low complexity. Serine 950 is modified (phosphoserine). Polar residues predominate over residues 952-964 (CGSTLTDANSATQ). At serine 973 the chain carries Phosphoserine.

Interacts with PPP1CC. Phosphorylated by CDK1. May regulate its subcellular location.

It is found in the nucleus. Regulator of chromosome structure during mitosis required for condensin-depleted chromosomes to retain their compact architecture through anaphase. Acts by mediating the recruitment of phopsphatase PP1-gamma subunit (PPP1CC) to chromatin at anaphase and into the following interphase. At anaphase onset, its association with chromatin targets a pool of PPP1CC to dephosphorylate substrates. The polypeptide is Cell division cycle-associated protein 2 (Cdca2) (Mus musculus (Mouse)).